A 386-amino-acid polypeptide reads, in one-letter code: GTPase Obg (386 aa).

The region spanning 4-162 is the Obg domain; that stretch reads SNFVDYVKIY…MTVILELKLL (159 aa). Residues 18–45 are disordered; it reads KGGRGSTHMRREKYTPNGGPDGGDGGRG. The span at 36–45 shows a compositional bias: gly residues; sequence GPDGGDGGRG. The OBG-type G domain maps to 163 to 329; the sequence is ADVGLVGFPN…LKDILWTELN (167 aa). GTP is bound by residues 169–176, 194–198, 216–219, 283–286, and 310–312; these read GFPNAGKS, FTTLE, DIPG, TKSD, and SSV. Mg(2+)-binding residues include Ser176 and Thr196. The segment at 351–386 is disordered; that stretch reads ELKDMGEDEELDYEYEDDGDEDDLDYEYEEEDWEDK. Residues 356-386 are compositionally biased toward acidic residues; it reads GEDEELDYEYEDDGDEDDLDYEYEEEDWEDK.

Belongs to the TRAFAC class OBG-HflX-like GTPase superfamily. OBG GTPase family. In terms of assembly, monomer. Requires Mg(2+) as cofactor.

The protein localises to the cytoplasm. Functionally, an essential GTPase which binds GTP, GDP and possibly (p)ppGpp with moderate affinity, with high nucleotide exchange rates and a fairly low GTP hydrolysis rate. Plays a role in control of the cell cycle, stress response, ribosome biogenesis and in those bacteria that undergo differentiation, in morphogenesis control. The protein is GTPase Obg of Bacteroides fragilis (strain YCH46).